We begin with the raw amino-acid sequence, 178 residues long: Large ribosomal subunit protein uL6 (178 aa).

The protein belongs to the universal ribosomal protein uL6 family. As to quaternary structure, part of the 50S ribosomal subunit.

In terms of biological role, this protein binds to the 23S rRNA, and is important in its secondary structure. It is located near the subunit interface in the base of the L7/L12 stalk, and near the tRNA binding site of the peptidyltransferase center. This is Large ribosomal subunit protein uL6 from Streptococcus sanguinis (strain SK36).